Reading from the N-terminus, the 1486-residue chain is Glutamate synthase [NADPH] large chain (1486 aa).

A propeptide spanning residues M1–N11 is cleaved from the precursor. C12 acts as the Nucleophile in catalysis. In terms of domain architecture, Glutamine amidotransferase type-2 spans C12–R402. L1049–G1101 provides a ligand contact to FMN. [3Fe-4S] cluster is bound by residues C1102, C1108, and C1113.

The protein belongs to the glutamate synthase family. In terms of assembly, aggregate of 4 catalytic active heterodimers, consisting of a large and a small subunit. [3Fe-4S] cluster serves as cofactor. Requires FAD as cofactor. It depends on FMN as a cofactor.

It catalyses the reaction 2 L-glutamate + NADP(+) = L-glutamine + 2-oxoglutarate + NADPH + H(+). It functions in the pathway amino-acid biosynthesis; L-glutamate biosynthesis via GLT pathway; L-glutamate from 2-oxoglutarate and L-glutamine (NADP(+) route): step 1/1. It participates in energy metabolism; nitrogen metabolism. Its function is as follows. Catalyzes the conversion of L-glutamine and 2-oxoglutarate into two molecules of L-glutamate. The sequence is that of Glutamate synthase [NADPH] large chain (gltB) from Escherichia coli (strain K12).